A 492-amino-acid polypeptide reads, in one-letter code: Trigger factor (492 aa).

A PPIase FKBP-type domain is found at 169 to 254 (GDRVSIDYVG…VKEVSKPGEL (86 aa)). The disordered stretch occupies residues 441-492 (LMADDEDAETTTKAKPAKKAAAKKAEAKANEDEAEEPKKKAAPKKKAAKDAE). A compositionally biased stretch (basic and acidic residues) spans 463-479 (KKAEAKANEDEAEEPKK). The span at 480 to 492 (KAAPKKKAAKDAE) shows a compositional bias: basic residues.

Belongs to the FKBP-type PPIase family. Tig subfamily.

It is found in the cytoplasm. The catalysed reaction is [protein]-peptidylproline (omega=180) = [protein]-peptidylproline (omega=0). Its function is as follows. Involved in protein export. Acts as a chaperone by maintaining the newly synthesized protein in an open conformation. Functions as a peptidyl-prolyl cis-trans isomerase. The protein is Trigger factor of Mesorhizobium japonicum (strain LMG 29417 / CECT 9101 / MAFF 303099) (Mesorhizobium loti (strain MAFF 303099)).